The sequence spans 380 residues: Queuine tRNA-ribosyltransferase (380 aa).

Aspartate 96 functions as the Proton acceptor in the catalytic mechanism. Substrate contacts are provided by residues 96–100, aspartate 150, glutamine 193, and glycine 220; that span reads DSGGF. An RNA binding region spans residues 251 to 257; that stretch reads GVGAPDS. The active-site Nucleophile is the aspartate 270. Residues 275–279 form an RNA binding; important for wobble base 34 recognition region; sequence TRIAR. The Zn(2+) site is built by cysteine 308, cysteine 310, cysteine 313, and histidine 339.

It belongs to the queuine tRNA-ribosyltransferase family. In terms of assembly, homodimer. Within each dimer, one monomer is responsible for RNA recognition and catalysis, while the other monomer binds to the replacement base PreQ1. Zn(2+) serves as cofactor.

The catalysed reaction is 7-aminomethyl-7-carbaguanine + guanosine(34) in tRNA = 7-aminomethyl-7-carbaguanosine(34) in tRNA + guanine. It functions in the pathway tRNA modification; tRNA-queuosine biosynthesis. Its function is as follows. Catalyzes the base-exchange of a guanine (G) residue with the queuine precursor 7-aminomethyl-7-deazaguanine (PreQ1) at position 34 (anticodon wobble position) in tRNAs with GU(N) anticodons (tRNA-Asp, -Asn, -His and -Tyr). Catalysis occurs through a double-displacement mechanism. The nucleophile active site attacks the C1' of nucleotide 34 to detach the guanine base from the RNA, forming a covalent enzyme-RNA intermediate. The proton acceptor active site deprotonates the incoming PreQ1, allowing a nucleophilic attack on the C1' of the ribose to form the product. After dissociation, two additional enzymatic reactions on the tRNA convert PreQ1 to queuine (Q), resulting in the hypermodified nucleoside queuosine (7-(((4,5-cis-dihydroxy-2-cyclopenten-1-yl)amino)methyl)-7-deazaguanosine). This Streptococcus equi subsp. zooepidemicus (strain H70) protein is Queuine tRNA-ribosyltransferase.